A 429-amino-acid polypeptide reads, in one-letter code: Glutamate-1-semialdehyde 2,1-aminomutase (429 aa).

Residue Lys-267 is modified to N6-(pyridoxal phosphate)lysine.

The protein belongs to the class-III pyridoxal-phosphate-dependent aminotransferase family. HemL subfamily. Homodimer. The cofactor is pyridoxal 5'-phosphate.

The protein localises to the cytoplasm. The catalysed reaction is (S)-4-amino-5-oxopentanoate = 5-aminolevulinate. It functions in the pathway porphyrin-containing compound metabolism; protoporphyrin-IX biosynthesis; 5-aminolevulinate from L-glutamyl-tRNA(Glu): step 2/2. The polypeptide is Glutamate-1-semialdehyde 2,1-aminomutase (Stenotrophomonas maltophilia (strain K279a)).